A 606-amino-acid chain; its full sequence is Flagellar WD repeat-containing protein Pf20 (606 aa).

A disordered region spans residues proline 229–serine 250. WD repeat units lie at residues glycine 324–histidine 354, glycine 366–aspartate 396, aspartate 408–aspartate 438, glycine 450–aspartate 480, glycine 492–aspartate 522, threonine 534–serine 564, and glycine 576–serine 606.

In terms of assembly, inter-microtubule bridges in flagella.

The protein resides in the cell projection. The protein localises to the cilium. It is found in the flagellum. The sequence is that of Flagellar WD repeat-containing protein Pf20 (PF20) from Chlamydomonas reinhardtii (Chlamydomonas smithii).